We begin with the raw amino-acid sequence, 301 residues long: Homeobox protein Hox-D13 (301 aa).

Disordered regions lie at residues 1 to 20 (MDGL…TPGQ) and 55 to 75 (GERS…PGSG). A compositionally biased stretch (gly residues) spans 8-18 (SSGGGGGGGTP). Positions 234-293 (GRKKRVPYTKLQLKELENEYAINKFINKDKRRRISAATNLSERQVTIWFQNRRVKDKKIV) form a DNA-binding region, homeobox.

Belongs to the Abd-B homeobox family.

Its subcellular location is the nucleus. In terms of biological role, sequence-specific transcription factor that binds gene promoters and activates their transcription. Part of a developmental regulatory system that provides cells with specific positional identities on the anterior-posterior axis. The chain is Homeobox protein Hox-D13 (HOXD13) from Gallus gallus (Chicken).